Consider the following 131-residue polypeptide: Protein Turandot M (131 aa).

A signal peptide spans 1 to 23; the sequence is MNPTVYLSCLVVFSLFYLGKAQA.

This sequence belongs to the Turandot family.

The protein localises to the secreted. A humoral factor that may play a role in stress tolerance. Requires Mekk1 expression in the fat body to regulate response to septic injury and consequent immune response. This is Protein Turandot M from Drosophila yakuba (Fruit fly).